The chain runs to 131 residues: MATVPTRSGSPRQLTTKQTGDAWEAQARRWLEGKGLRFIAANVNERGGEIDLIMREGRTTIFVEVRYRRSALYGGAAASVTRSKQHKLLQTARLWLARHNGSFDTVDCRFDVVAFTGNEVEWIKDAFNDHS.

Positions 1-19 (MATVPTRSGSPRQLTTKQT) are enriched in polar residues. The segment at 1-21 (MATVPTRSGSPRQLTTKQTGD) is disordered.

It belongs to the UPF0102 family.

The sequence is that of UPF0102 protein YraN from Escherichia coli (strain K12 / MC4100 / BW2952).